A 236-amino-acid polypeptide reads, in one-letter code: uncharacterized protein (236 aa).

It to E.coli YfjP and YkfA.

This is an uncharacterized protein from Escherichia coli (strain K12).